The chain runs to 106 residues: Small ribosomal subunit protein bS20 (106 aa).

Residues 1–20 show a composition bias toward basic residues; the sequence is MATAKPKKKNPRLASGRKRV. Residues 1 to 21 are disordered; that stretch reads MATAKPKKKNPRLASGRKRVR.

The protein belongs to the bacterial ribosomal protein bS20 family.

Binds directly to 16S ribosomal RNA. This Polaromonas naphthalenivorans (strain CJ2) protein is Small ribosomal subunit protein bS20.